The primary structure comprises 71 residues: uncharacterized protein (71 aa).

Positions 1-20 are disordered; that stretch reads MQKLNKHLKKKKQKRKKMKK.

This is an uncharacterized protein from Methanocaldococcus jannaschii (strain ATCC 43067 / DSM 2661 / JAL-1 / JCM 10045 / NBRC 100440) (Methanococcus jannaschii).